Reading from the N-terminus, the 375-residue chain is Lipid droplet hydrolase 1 (375 aa).

One can recognise an AB hydrolase-1 domain in the interval valine 88 to proline 358. The active-site Charge relay system is the serine 177. Positions serine 373–leucine 375 match the Microbody targeting signal motif.

The protein belongs to the AB hydrolase superfamily. Lipase family.

The protein resides in the lipid droplet. It carries out the reaction a triacylglycerol + H2O = a diacylglycerol + a fatty acid + H(+). Functionally, serine hydrolase required for the maintenance of steady state level of non-polar and polar lipids of lipid droplets and thus plays a role in maintaining the lipids homeostasis. Exhibits both esterase and triacylglycerol lipase activity. The protein is Lipid droplet hydrolase 1 of Saccharomyces cerevisiae (strain ATCC 204508 / S288c) (Baker's yeast).